The following is a 93-amino-acid chain: Small ribosomal subunit protein uS19 (93 aa).

The protein belongs to the universal ribosomal protein uS19 family.

Protein S19 forms a complex with S13 that binds strongly to the 16S ribosomal RNA. The sequence is that of Small ribosomal subunit protein uS19 from Micrococcus luteus (strain ATCC 4698 / DSM 20030 / JCM 1464 / CCM 169 / CCUG 5858 / IAM 1056 / NBRC 3333 / NCIMB 9278 / NCTC 2665 / VKM Ac-2230) (Micrococcus lysodeikticus).